The chain runs to 368 residues: uncharacterized protein (368 aa).

This sequence belongs to the CdaR family.

This is an uncharacterized protein from Bacillus subtilis (strain 168).